A 106-amino-acid polypeptide reads, in one-letter code: Transcriptional and immune response regulator (106 aa).

In terms of assembly, monomer. Interacts with NOTCH2 (via ANK repeats), the interaction inhibits the nuclear translocation of NOTCH2 N2ICD. Interacts (C-terminus) with CBY1 (C-terminus), TCIM competes with CTNNB1 for the interaction with CBY1. In terms of tissue distribution, ubiquitous. Expressed in thyroid papillary carcinoma. Expressed in liver, expression levels decrease in hepatocellular carcinoma. Slightly detected in normal lung, its expression is highly induced in lung cancer cells (at protein level).

The protein localises to the cytoplasm. It is found in the nucleus. The protein resides in the nucleolus. It localises to the nucleus speckle. Its function is as follows. Seems to be involved in the regulation of cell growth an differentiation, may play different and opposite roles depending on the tissue or cell type. May enhance the WNT-CTNNB1 pathway by relieving antagonistic activity of CBY1. Enhances the proliferation of follicular dendritic cells. Plays a role in the mitogen-activated MAPK2/3 signaling pathway, positively regulates G1-to-S-phase transition of the cell cycle. In endothelial cells, enhances key inflammatory mediators and inflammatory response through the modulation of NF-kappaB transcriptional regulatory activity. Involved in the regulation of heat shock response, seems to play a positive feedback with HSF1 to modulate heat-shock downstream gene expression. Plays a role in the regulation of hematopoiesis even if the mechanisms are unknown. In cancers such as thyroid or lung cancer, it has been described as promoter of cell proliferation, G1-to-S-phase transition and inhibitor of apoptosis. However, it negatively regulates self-renewal of liver cancer cells via suppresion of NOTCH2 signaling. The chain is Transcriptional and immune response regulator from Homo sapiens (Human).